The primary structure comprises 1216 residues: 1-phosphatidylinositol 4,5-bisphosphate phosphodiesterase beta-1 (1216 aa).

A lipid anchor (S-palmitoyl cysteine) is attached at Cys-17. Phosphoserine is present on Ser-236. The PI-PLC X-box domain occupies 316 to 467; it reads EDMSQPLSHY…LMYKILVKNK (152 aa). Active-site residues include His-331 and His-378. Ser-417 is modified (phosphoserine). A disordered region spans residues 469–534; it reads KSHKSSEGSG…MDEGTAGSEA (66 aa). A compositionally biased stretch (basic and acidic residues) spans 472-483; sequence KSSEGSGKKKLS. A compositionally biased stretch (low complexity) spans 491 to 501; sequence SDSSSVFEPSS. Positions 507–518 are enriched in acidic residues; the sequence is ADTESDDDDDDD. Thr-509 carries the post-translational modification Phosphothreonine. Residues Ser-511 and Ser-582 each carry the phosphoserine modification. The PI-PLC Y-box domain occupies 540-656; it reads MSNLVNYIQP…GYRLKPEFMR (117 aa). The C2 domain occupies 656 to 784; that stretch reads RRPDKHFDPF…CLRNERNQPL (129 aa). Disordered regions lie at residues 834–891, 933–993, 1071–1095, and 1172–1216; these read DEEE…VKAP, LVKR…IEQD, KMDK…EEEK, and KISE…DTPL. Residue Ser-887 is modified to Phosphoserine; by PKC. 2 stretches are compositionally biased toward basic and acidic residues: residues 941–951 and 959–979; these read TTDLIKEHTTK and YLRR…KKSE. Ser-978 and Ser-987 each carry phosphoserine. Over residues 980–991 the composition is skewed to polar residues; the sequence is PSSPDHVSSTIE. The segment covering 1075-1095 has biased composition (basic and acidic residues); the sequence is KRQEKITEAKSKDKSQMEEEK. The segment covering 1187 to 1198 has biased composition (polar residues); that stretch reads TSDSGKLNQKPP. A phosphoserine mark is found at Ser-1199 and Ser-1200. Positions 1207 to 1216 are enriched in basic and acidic residues; the sequence is NPGKEFDTPL.

In terms of assembly, interacts with DGKQ. Requires Ca(2+) as cofactor. Post-translationally, palmitoylated. Palmitoylation at Cys-17 by ZDHHC21 regulates the signaling activity of PLCB1 and the function of the endothelial barrier. Palmitoylation by ZDHHC21 is stimulated by inflammation.

It localises to the nucleus membrane. The protein resides in the cytoplasm. The enzyme catalyses a 1,2-diacyl-sn-glycero-3-phospho-(1D-myo-inositol-4,5-bisphosphate) + H2O = 1D-myo-inositol 1,4,5-trisphosphate + a 1,2-diacyl-sn-glycerol + H(+). It catalyses the reaction a 1,2-diacyl-sn-glycero-3-phospho-(1D-myo-inositol) + H2O = 1D-myo-inositol 1-phosphate + a 1,2-diacyl-sn-glycerol + H(+). Its function is as follows. Catalyzes the hydrolysis of 1-phosphatidylinositol 4,5-bisphosphate into diacylglycerol (DAG) and inositol 1,4,5-trisphosphate (IP3) and mediates intracellular signaling downstream of G protein-coupled receptors. Regulates the function of the endothelial barrier. This chain is 1-phosphatidylinositol 4,5-bisphosphate phosphodiesterase beta-1 (PLCB1), found in Bos taurus (Bovine).